We begin with the raw amino-acid sequence, 766 residues long: Dolichyl pyrophosphate Glc1Man9GlcNAc2 alpha-1,3-glucosyltransferase (766 aa).

A run of 12 helical transmembrane segments spans residues 6-26 (LVLAVTAILISFKCLLIPAYV), 60-80 (YPPFFAYFELGLASVAHFFGF), 96-116 (ILIFQRFSVIFCDILYIAVCA), 156-176 (SIHFQYNSMLTAIFLMSLFFI), 190-210 (ILLNFKHIYVYYALGYVFYYL), 228-248 (AISLAIALLIPFCASIFPFIH), 324-344 (PMGTLCLVVISSMIVLTGLVI), 350-370 (ADFSLFAVFSAFCFFYFGYHV), 395-415 (ILIHLTCIASFSLFPLLFTPF), 423-443 (ICVSYFFIQLVFLKRVTLMPL), 452-472 (VASWLLMGMVEVYNTFLHKWL), and 482-502 (LMAISILTAIELTGLIGALIW).

It belongs to the ALG6/ALG8 glucosyltransferase family.

Its subcellular location is the endoplasmic reticulum membrane. The enzyme catalyses an alpha-D-Glc-(1-&gt;3)-alpha-D-Man-(1-&gt;2)-alpha-D-Man-(1-&gt;2)-alpha-D-Man-(1-&gt;3)-[alpha-D-Man-(1-&gt;2)-alpha-D-Man-(1-&gt;3)-[alpha-D-Man-(1-&gt;2)-alpha-D-Man-(1-&gt;6)]-alpha-D-Man-(1-&gt;6)]-beta-D-Man-(1-&gt;4)-beta-D-GlcNAc-(1-&gt;4)-alpha-D-GlcNAc-diphospho-di-trans,poly-cis-dolichol + a di-trans,poly-cis-dolichyl beta-D-glucosyl phosphate = an alpha-D-Glc-(1-&gt;3)-alpha-D-Glc-(1-&gt;3)-alpha-D-Man-(1-&gt;2)-alpha-D-Man-(1-&gt;2)-alpha-D-Man-(1-&gt;3)-[alpha-D-Man-(1-&gt;2)-alpha-D-Man-(1-&gt;3)-[alpha-D-Man-(1-&gt;2)-alpha-D-Man-(1-&gt;6)]-alpha-D-Man-(1-&gt;6)]-beta-D-Man-(1-&gt;4)-beta-D-GlcNAc-(1-&gt;4)-alpha-D-GlcNAc-diphospho-di-trans,poly-cis-dolichol + a di-trans,poly-cis-dolichyl phosphate + H(+). It participates in protein modification; protein glycosylation. Its function is as follows. Dolichyl pyrophosphate Glc1Man9GlcNAc2 alpha-1,3-glucosyltransferase that operates in the biosynthetic pathway of dolichol-linked oligosaccharides, the glycan precursors employed in protein asparagine (N)-glycosylation. The assembly of dolichol-linked oligosaccharides begins on the cytosolic side of the endoplasmic reticulum membrane and finishes in its lumen. The sequential addition of sugars to dolichol pyrophosphate produces dolichol-linked oligosaccharides containing fourteen sugars, including two GlcNAcs, nine mannoses and three glucoses. Once assembled, the oligosaccharide is transferred from the lipid to nascent proteins by oligosaccharyltransferases. In the lumen of the endoplasmic reticulum, adds the second glucose residue from dolichyl phosphate glucose (Dol-P-Glc) onto the lipid-linked oligosaccharide intermediate Glc(1)Man(9)GlcNAc(2)-PP-Dol to produce Glc(2)Man(9)GlcNAc(2)-PP-Dol. In Caenorhabditis elegans, this protein is Dolichyl pyrophosphate Glc1Man9GlcNAc2 alpha-1,3-glucosyltransferase.